Here is a 463-residue protein sequence, read N- to C-terminus: NADH dehydrogenase [ubiquinone] iron-sulfur protein 2, mitochondrial (463 aa).

A mitochondrion-targeting transit peptide spans 1–33 (MAALRALCGFRGVAAQVLRPGAGVRLPIQPSRG). Position 62 is an N6-acetyllysine (Lys62). A Symmetric dimethylarginine modification is found at Arg118. Residues Cys326, Cys332, and Cys347 each coordinate [4Fe-4S] cluster.

The protein belongs to the complex I 49 kDa subunit family. In terms of assembly, core subunit of respiratory chain NADH dehydrogenase (Complex I) which is composed of 45 different subunits. Component of the iron-sulfur (IP) fragment of the enzyme. Interacts with NDUFAF3. Interacts with NDUFAF7. Interacts with CERS2. [4Fe-4S] cluster serves as cofactor. Dimethylation at Arg-118 by NDUFAF7 takes place after NDUFS2 assembles into the complex I, leading to stabilize the early intermediate complex.

Its subcellular location is the mitochondrion inner membrane. The catalysed reaction is a ubiquinone + NADH + 5 H(+)(in) = a ubiquinol + NAD(+) + 4 H(+)(out). In terms of biological role, core subunit of the mitochondrial membrane respiratory chain NADH dehydrogenase (Complex I) which catalyzes electron transfer from NADH through the respiratory chain, using ubiquinone as an electron acceptor. Essential for the catalytic activity and assembly of complex I. Redox-sensitive, critical component of the oxygen-sensing pathway in the pulmonary vasculature which plays a key role in acute pulmonary oxygen-sensing and hypoxic pulmonary vasoconstriction. Plays an important role in carotid body sensing of hypoxia. Essential for glia-like neural stem and progenitor cell proliferation, differentiation and subsequent oligodendrocyte or neuronal maturation. This Pan troglodytes (Chimpanzee) protein is NADH dehydrogenase [ubiquinone] iron-sulfur protein 2, mitochondrial (NDUFS2).